The following is a 306-amino-acid chain: Phenylcoumaran benzylic ether reductase IRL1 (306 aa).

NADP(+) contacts are provided by residues 10-16 (GATGYIG), arginine 35, and lysine 44. The Proton acceptor role is filled by lysine 132. Residue arginine 136 coordinates NADP(+).

Belongs to the NmrA-type oxidoreductase family. Isoflavone reductase subfamily. In terms of tissue distribution, highly expressed in sclerotesta. Expressed in roots, and two-to-four year stems.

The enzyme catalyses (-)-dehydrodiconiferyl alcohol + NADPH + H(+) = (S)-isodihydrodehydrodiconiferyl alcohol + NADP(+). It carries out the reaction (+)-dehydrodiconiferyl alcohol + NADPH + H(+) = (R)-isodihydrodehydrodiconiferyl alcohol + NADP(+). The catalysed reaction is (2R,3S)-dihydrodehydrodiconiferyl alcohol + NADPH + H(+) = (S)-tetrahydrodehydrodiconiferyl alcohol + NADP(+). It catalyses the reaction (2S,3R)-dihydrodehydrodiconiferyl alcohol + NADPH + H(+) = (R)-tetrahydrodehydrodiconiferyl alcohol + NADP(+). Functionally, oxidoreductase involved in lignan biosynthesis. Catalyzes the NADPH-dependent reduction of phenylcoumaran benzylic ethers. Converts dehydrodiconiferyl alcohol (DDC) to isodihydrodehydrodiconiferyl alcohol (IDDDC), and dihydrodehydrodiconiferyl alcohol (DDDC) to tetrahydrodehydrodiconiferyl alcohol (TDDC). May regulate changes in lignin content and accumulation of flavonoids. The polypeptide is Phenylcoumaran benzylic ether reductase IRL1 (Ginkgo biloba (Ginkgo)).